A 118-amino-acid polypeptide reads, in one-letter code: UPF0342 protein BAMEG_3696 (118 aa).

The protein belongs to the UPF0342 family.

The polypeptide is UPF0342 protein BAMEG_3696 (Bacillus anthracis (strain CDC 684 / NRRL 3495)).